A 239-amino-acid polypeptide reads, in one-letter code: Zinc finger protein 575 (239 aa).

A disordered region spans residues 1–62; sequence MLGGSVKSEV…PQRPHRCPDC (62 aa). The segment covering 22-31 has biased composition (basic and acidic residues); it reads PETKAPHQDL. A compositionally biased stretch (basic residues) spans 46–57; sequence RPRRRPPPQRPH. C2H2-type zinc fingers lie at residues 57-79, 85-107, 113-135, 141-163, 171-193, and 207-230; these read HRCP…RLAH, HPCP…RLTH, HSCP…LWTH, YPCP…RHTH, YPCP…RLCH, and HRCS…RSHH.

This sequence belongs to the krueppel C2H2-type zinc-finger protein family.

It is found in the nucleus. In terms of biological role, may be involved in transcriptional regulation. This chain is Zinc finger protein 575 (Znf575), found in Mus musculus (Mouse).